We begin with the raw amino-acid sequence, 911 residues long: Protein translocase subunit SecA (911 aa).

Residues glutamine 87, 105 to 109, and aspartate 512 contribute to the ATP site; that span reads GEGKT. Residues 861–893 form a disordered region; it reads APGLESEQLSEEGAEVAVASAPVRNDQKLGRNE. Residues cysteine 895, cysteine 897, cysteine 906, and histidine 907 each contribute to the Zn(2+) site.

Belongs to the SecA family. In terms of assembly, monomer and homodimer. Part of the essential Sec protein translocation apparatus which comprises SecA, SecYEG and auxiliary proteins SecDF-YajC and YidC. Zn(2+) is required as a cofactor.

It localises to the cell inner membrane. The protein resides in the cytoplasm. It carries out the reaction ATP + H2O + cellular proteinSide 1 = ADP + phosphate + cellular proteinSide 2.. In terms of biological role, part of the Sec protein translocase complex. Interacts with the SecYEG preprotein conducting channel. Has a central role in coupling the hydrolysis of ATP to the transfer of proteins into and across the cell membrane, serving both as a receptor for the preprotein-SecB complex and as an ATP-driven molecular motor driving the stepwise translocation of polypeptide chains across the membrane. The sequence is that of Protein translocase subunit SecA from Pseudomonas putida (strain ATCC 700007 / DSM 6899 / JCM 31910 / BCRC 17059 / LMG 24140 / F1).